A 1047-amino-acid chain; its full sequence is FACT complex subunit SPT16 (1047 aa).

Ala-2 carries the post-translational modification N-acetylalanine. An N6-acetyllysine modification is found at Lys-139. At Ser-188 the chain carries Phosphoserine. Residues Lys-196 and Lys-223 each carry the N6-acetyllysine modification. Position 455 is a phosphoserine (Ser-455). Positions 465 to 507 (RNEMTAEEKRRAHQKELAAQLNEEAKRRLTEQKGEQQIQKARK) form a coiled coil. Residues 491 to 518 (RRLTEQKGEQQIQKARKSNVSYKNPSLM) are disordered. A Glycyl lysine isopeptide (Lys-Gly) (interchain with G-Cter in SUMO2) cross-link involves residue Lys-497. Residues 499–514 (EQQIQKARKSNVSYKN) are compositionally biased toward polar residues. Position 508 is a phosphoserine (Ser-508). An N6-acetyllysine; alternate modification is found at Lys-513. Lys-513 participates in a covalent cross-link: Glycyl lysine isopeptide (Lys-Gly) (interchain with G-Cter in SUMO2); alternate. Lys-647 is covalently cross-linked (Glycyl lysine isopeptide (Lys-Gly) (interchain with G-Cter in SUMO2)). Residues Ser-650 and Ser-658 each carry the phosphoserine modification. Residues Lys-732 and Lys-786 each carry the N6-acetyllysine modification. Thr-903 carries the phosphothreonine modification. At Lys-904 the chain carries N6-acetyllysine. The tract at residues 918–1047 (EQGGWSFLEP…SSAPPKKKRK (130 aa)) is disordered. The segment covering 927–973 (PEGEGSDAEDGDSESEIEDETFNPSEDDYEEEEEDSDEDYSSEAEES) has biased composition (acidic residues). A phosphoserine mark is found at Ser-979, Ser-982, Ser-986, and Ser-1015. Residues 985-1005 (ESGKDWDELEEEARKADRESR) show a composition bias toward basic and acidic residues. Low complexity predominate over residues 1024 to 1039 (VHSSGRGSNRGSRHSS).

It belongs to the peptidase M24 family. SPT16 subfamily. Interacts with MYOG (via C-terminal region). Component of the FACT complex, a stable heterodimer of SSRP1 and SUPT16H. Also a component of a CK2-SPT16-SSRP1 complex which forms following UV irradiation, composed of SSRP1, SUPT16H, CSNK2A1, CSNK2A2 and CSNK2B. Interacts with NEK9. Binds to histone H2A-H2B. Identified in a centromere complex containing histones H2A, H2B and H4, and at least CENPA, CENPB, CENPC, CENPT, CENPN, HJURP, SUPT16H, SSRP1 and RSF1. Interacts with GTF2E2. Post-translationally, ADP-ribosylated. ADP-ribosylation by PARP1 is induced by genotoxic stress and correlates with dissociation of FACT from chromatin. As to expression, widely expressed. Expressed in brain, liver, heart, kidneys, lungs, spleen, thymus, ovary, and testes, with highest levels of expression observed in thymus.

Its subcellular location is the nucleus. It is found in the chromosome. In terms of biological role, component of the FACT complex, a general chromatin factor that acts to reorganize nucleosomes. The FACT complex is involved in multiple processes that require DNA as a template such as mRNA elongation, DNA replication and DNA repair. During transcription elongation the FACT complex acts as a histone chaperone that both destabilizes and restores nucleosomal structure. It facilitates the passage of RNA polymerase II and transcription by promoting the dissociation of one histone H2A-H2B dimer from the nucleosome, then subsequently promotes the reestablishment of the nucleosome following the passage of RNA polymerase II. The FACT complex is probably also involved in phosphorylation of 'Ser-392' of p53/TP53 via its association with CK2 (casein kinase II). The sequence is that of FACT complex subunit SPT16 (Supt16h) from Mus musculus (Mouse).